The sequence spans 920 residues: Coatomer subunit beta'-1 (920 aa).

8 WD repeats span residues 13–52 (QRSE…MVKS), 55–94 (VTEL…KIKV), 97–136 (AHAD…LCTQ), 140–180 (GHSH…PNFT), 183–224 (AHLK…CVQT), 227–266 (GHTH…LENT), 350–392 (TCDL…GSAL), and 460–500 (RIDV…SYFD). The interval 850-920 (LEQGDVLDEV…EQWVLTPPQE (71 aa)) is disordered. The segment covering 854–875 (DVLDEVGEEGEDGEEEEEEDRQ) has biased composition (acidic residues).

The protein belongs to the WD repeat COPB2 family. As to quaternary structure, oligomeric complex that consists of at least the alpha, beta, beta', gamma, delta, epsilon and zeta subunits.

It is found in the cytoplasm. The protein resides in the golgi apparatus membrane. Its subcellular location is the cytoplasmic vesicle. The protein localises to the COPI-coated vesicle membrane. Functionally, the coatomer is a cytosolic protein complex that binds to dilysine motifs and reversibly associates with Golgi non-clathrin-coated vesicles, which further mediate biosynthetic protein transport from the ER, via the Golgi up to the trans Golgi network. Coatomer complex is required for budding from Golgi membranes, and is essential for the retrograde Golgi-to-ER transport of dilysine-tagged proteins. This is Coatomer subunit beta'-1 from Arabidopsis thaliana (Mouse-ear cress).